Consider the following 107-residue polypeptide: uncharacterized protein (107 aa).

The signal sequence occupies residues 1 to 20 (MYIKGRLIFFFVVLVIALCS).

This is an uncharacterized protein from Listeria monocytogenes serovar 1/2a (strain ATCC BAA-679 / EGD-e).